We begin with the raw amino-acid sequence, 35 residues long: Kappa-stichotoxin-She3a (35 aa).

Residues 3-35 enclose the ShKT domain; sequence CIDTIPKSRCTAFQCKHSMKYRLSFCRKTCGTC. Cystine bridges form between Cys-3-Cys-35, Cys-12-Cys-28, and Cys-17-Cys-32.

It belongs to the sea anemone type 1 potassium channel toxin family. Type 1a subfamily.

It is found in the secreted. The protein resides in the nematocyst. Functionally, peptide with both antimicrobial and neurotoxin activities. Inhibits voltage-dependent potassium channels. Potently blocks Kv1.1/KCNA1 (IC(50)=6.7-87 pM) and Kv1.3/KCNA3 (IC(50)=10-250 pM). Less potently blocks Kv1.4/KCNA4 (IC(50)=0.31 nM), and Kv1.6/KCNA6 (IC(50)=0.16 nM). Shows moderate activity on Kv1.2/KCNA2 (IC(50)=9 nM), Kv1.7/KCNA7 (IC(50)=11.5 nM), and KCa3.1/KCNN4 (Kd=0.03-30 nM). Blocks Kv channels by binding to a shallow vestibule at the outer entrance to the ion conduction pathway and occluding the entrance to the pore. Shows antibacterial activity against all tested bacteria (the Gram-positive bacteria B.subtilis and S.aureus, and the Gram-negative bacteria S.typhimurium and P.aeruginosa). This chain is Kappa-stichotoxin-She3a, found in Stichodactyla helianthus (Sun anemone).